A 66-amino-acid polypeptide reads, in one-letter code: Large ribosomal subunit protein uL29 (66 aa).

It belongs to the universal ribosomal protein uL29 family.

The polypeptide is Large ribosomal subunit protein uL29 (Methylibium petroleiphilum (strain ATCC BAA-1232 / LMG 22953 / PM1)).